A 2364-amino-acid chain; its full sequence is Spectrin beta chain, non-erythrocytic 1 (2364 aa).

Thr2 carries the post-translational modification N-acetylthreonine. Positions 2–275 (TTTVATDYDN…IITYVVTYYH (274 aa)) are actin-binding. Phosphoserine is present on residues Ile14 and Ser36. Calponin-homology (CH) domains follow at residues 54–158 (AVQK…LRFQ) and 173–278 (KSAK…HYFS). Lys90 is subject to N6-acetyllysine. Ser228 carries the post-translational modification Phosphoserine. Spectrin repeat units follow at residues 303 to 411 (MIEK…LALR), 423 to 525 (LARR…QRLE), 530 to 636 (LQKI…RLEE), 639 to 742 (RLWK…RLEE), 745 to 847 (LLHQ…ALQD), 850 to 952 (ALYK…DALL), 957 to 1060 (IQNY…SLGE), 1063 to 1166 (KLQQ…NLLS), 1170 to 1258 (AYQQ…DRHR), 1276 to 1376 (DLQK…AQRL), 1381 to 1482 (KAEL…HNLL), 1486 to 1590 (EIHQ…RLEE), 1592 to 1696 (HRAQ…KLDE), 1698 to 1801 (HRLF…TQIL), and 1805 to 1907 (YELH…RVRL). Phosphoserine is present on residues Ser817, Ser825, Ser903, Ser1057, Ser1076, Ser1079, and Ser1237. Phosphoserine is present on residues Ser1388, Ser1447, and Ser1557. The segment at 1563 to 2093 (IRQRLADLKQ…LLEVRRQQEE (531 aa)) is interaction with ANK2. Residue Tyr1805 is modified to Phosphotyrosine. Lys1815, Lys1913, and Lys1989 each carry N6-acetyllysine. Spectrin repeat units follow at residues 1914-2014 (FRFF…EWLR) and 2018-2097 (EVHQ…EERK). A disordered region spans residues 2089–2196 (RQQEEEERKR…TLPARTQETP (108 aa)). 3 positions are modified to phosphoserine: Ser2102, Ser2128, and Ser2138. Over residues 2115–2131 (SQQQWDTSKGEQVSQNG) the composition is skewed to polar residues. A compositionally biased stretch (polar residues) spans 2145-2166 (VDTSEMVNGATEQRTSSKESSP). At Thr2147 the chain carries Phosphothreonine. At Ser2148 the chain carries Phosphoserine. The segment at 2149 to 2177 (EMVNGATEQRTSSKESSPIPSPTSDRKAK) is mediates interaction with CAMSAP1. The residue at position 2159 (Thr2159) is a Phosphothreonine. Phosphoserine occurs at positions 2160, 2161, 2164, 2165, and 2169. Residue Thr2171 is modified to Phosphothreonine. Residues Ser2172 and Ser2184 each carry the phosphoserine modification. Positions 2184–2196 (SAATLPARTQETP) are enriched in polar residues. Phosphothreonine occurs at positions 2187 and 2195. A PH domain is found at 2197 to 2307 (SAQMEGFLNR…WIQAISSAIS (111 aa)). A disordered region spans residues 2309 to 2364 (DKHEVSASTQSTPASSRAQTLPTSVVTITSESSPGKREKDKEKDKEKRFSLFGKKK). Ser2314 and Ser2319 each carry phosphoserine. The segment covering 2314 to 2341 (SASTQSTPASSRAQTLPTSVVTITSESS) has biased composition (polar residues). Residue Thr2320 is modified to Phosphothreonine. Ser2324 is a glycosylation site (O-linked (GlcNAc) serine). A Phosphothreonine modification is found at Thr2328. Ser2340 and Ser2341 each carry phosphoserine. Over residues 2342 to 2357 (PGKREKDKEKDKEKRF) the composition is skewed to basic and acidic residues.

Belongs to the spectrin family. Interacts with CAMSAP1. Interacts with ANK2. Interacts with CPNE4 (via VWFA domain). Like erythrocyte spectrin, the spectrin-like proteins are capable to form dimers which can further associate to tetramers. Can form heterodimers with SPTAN1. Isoform Short cannot bind to the axonal protein fodaxin. Isoform 2 is present in brain, lung and kidney (at protein level).

The protein resides in the cytoplasm. Its subcellular location is the cytoskeleton. It is found in the myofibril. The protein localises to the sarcomere. It localises to the m line. The protein resides in the cytosol. Its subcellular location is the cell membrane. Functionally, fodrin, which seems to be involved in secretion, interacts with calmodulin in a calcium-dependent manner and is thus candidate for the calcium-dependent movement of the cytoskeleton at the membrane. Plays a critical role in central nervous system development and function. The polypeptide is Spectrin beta chain, non-erythrocytic 1 (SPTBN1) (Homo sapiens (Human)).